The sequence spans 77 residues: Large ribosomal subunit protein bL28 (77 aa).

Residues 1–25 form a disordered region; sequence MARVCQVTGKAPMSGNNVSHANNKT.

It belongs to the bacterial ribosomal protein bL28 family.

This is Large ribosomal subunit protein bL28 from Paraburkholderia xenovorans (strain LB400).